The following is a 215-amino-acid chain: Protein-L-isoaspartate O-methyltransferase (215 aa).

The active site involves serine 62.

Belongs to the methyltransferase superfamily. L-isoaspartyl/D-aspartyl protein methyltransferase family.

The protein localises to the cytoplasm. The enzyme catalyses [protein]-L-isoaspartate + S-adenosyl-L-methionine = [protein]-L-isoaspartate alpha-methyl ester + S-adenosyl-L-homocysteine. Its function is as follows. Catalyzes the methyl esterification of L-isoaspartyl residues in peptides and proteins that result from spontaneous decomposition of normal L-aspartyl and L-asparaginyl residues. It plays a role in the repair and/or degradation of damaged proteins. This Ruegeria pomeroyi (strain ATCC 700808 / DSM 15171 / DSS-3) (Silicibacter pomeroyi) protein is Protein-L-isoaspartate O-methyltransferase.